Reading from the N-terminus, the 63-residue chain is Large ribosomal subunit protein bL28 (63 aa).

Belongs to the bacterial ribosomal protein bL28 family.

This chain is Large ribosomal subunit protein bL28, found in Clostridium botulinum (strain ATCC 19397 / Type A).